The sequence spans 572 residues: Hemagglutinin-neuraminidase (572 aa).

Residues 1–31 lie on the Intravirion side of the membrane; the sequence is MEYWKHTNHGKDAGNELETSMATHGNKLTNK. Residues 32–52 form a helical membrane-spanning segment; sequence ITYILWTIILVLLSIVFIIVL. At 53 to 572 the chain is on the virion surface side; sequence INSIKSEKAH…FKTEIPKSCS (520 aa). Disulfide bonds link cysteine 190/cysteine 214 and cysteine 256/cysteine 269. The segment at 252-257 is involved in neuraminidase activity; it reads NRKSCS. 2 N-linked (GlcNAc...) asparagine; by host glycosylation sites follow: asparagine 308 and asparagine 351. Cystine bridges form between cysteine 355–cysteine 469 and cysteine 463–cysteine 473. Asparagine 523 carries N-linked (GlcNAc...) asparagine; by host glycosylation. Cysteine 535 and cysteine 544 are oxidised to a cystine.

It belongs to the paramyxoviruses hemagglutinin-neuraminidase family. In terms of assembly, homotetramer; composed of disulfide-linked homodimers. Interacts with F protein trimer.

The protein resides in the virion membrane. It localises to the host cell membrane. It carries out the reaction Hydrolysis of alpha-(2-&gt;3)-, alpha-(2-&gt;6)-, alpha-(2-&gt;8)- glycosidic linkages of terminal sialic acid residues in oligosaccharides, glycoproteins, glycolipids, colominic acid and synthetic substrates.. Its function is as follows. Attaches the virus to sialic acid-containing cell receptors and thereby initiating infection. Binding of HN protein to the receptor induces a conformational change that allows the F protein to trigger virion/cell membranes fusion. In terms of biological role, neuraminidase activity ensures the efficient spread of the virus by dissociating the mature virions from the neuraminic acid containing glycoproteins. This Homo sapiens (Human) protein is Hemagglutinin-neuraminidase (HN).